The chain runs to 330 residues: tRNA-modifying protein YgfZ (330 aa).

Folate contacts are provided by W28 and W190.

Belongs to the tRNA-modifying YgfZ family.

The protein localises to the cytoplasm. Functionally, folate-binding protein involved in regulating the level of ATP-DnaA and in the modification of some tRNAs. It is probably a key factor in regulatory networks that act via tRNA modification, such as initiation of chromosomal replication. The chain is tRNA-modifying protein YgfZ from Yersinia pseudotuberculosis serotype IB (strain PB1/+).